A 365-amino-acid chain; its full sequence is PR domain zinc finger protein 12 (365 aa).

An SET domain is found at 86–203 (VEVIIAQSSI…PDQELLVWYG (118 aa)). 3 consecutive C2H2-type zinc fingers follow at residues 243–265 (MRCVICHRGFNSRSNLRSHMRIH), 271–293 (FVCRFCNRRFSQSSTLRNHVRLH), and 299–323 (YKCQVCQSAYSQLAGLRAHQKSARH). The disordered stretch occupies residues 318-338 (QKSARHRPPSTALQAHSPALP). Positions 329 to 338 (ALQAHSPALP) are enriched in low complexity.

The protein belongs to the class V-like SAM-binding methyltransferase superfamily. In terms of assembly, interacts with EHMT2.

The protein resides in the nucleus. Functionally, transcriptional regulator necessary for the development of nociceptive neurons, playing a key role in determining the nociceptive lineage from neural crest cell progenitors. Initiates neurogenesis and activates downstream pro-neuronal transcription factors, such as NEUROD1, BRN3A, and ISL1, specifically within nociceptive neurons, while repressing non-nociceptor cell fates. Essential for the proper function of nociceptors in adults, influencing both their excitability and their gene expression, thereby impacting how these neurons respond to various pain stimuli. The polypeptide is PR domain zinc finger protein 12 (Prdm12) (Mus musculus (Mouse)).